The primary structure comprises 216 residues: MSIALKQVFNKDKTFRPKRKFEPGTQRFELHKRAQASLNSGVDLKAAVQLPSGEDQNDWVAVHVVDFFNRINLIYGTICEFCTERTCPVMSGGPKYEYRWQDDLKYKKPTALPAPQYMNLLMDWIEVQINNEEIFPTCVGVPFPKNFLQICKKILCRLFRVFVHVYIHHFDRVIVMGAEAHVNTCYKHFYYFVTEMNLIDRKELEPLKEMTSRMCH.

Cys-82, Cys-87, His-164, and His-169 together coordinate Zn(2+).

It belongs to the MOB1/phocein family.

Functionally, modulates LATS1 expression in the Hippo signaling pathway which plays a pivotal role in organ size control and tumor suppression by restricting proliferation and promoting apoptosis. This Homo sapiens (Human) protein is MOB kinase activator 3B.